The primary structure comprises 431 residues: Enolase (431 aa).

Residue Q167 participates in (2R)-2-phosphoglycerate binding. The Proton donor role is filled by E209. 3 residues coordinate Mg(2+): D246, E290, and D317. Positions 342, 371, 372, and 393 each coordinate (2R)-2-phosphoglycerate. K342 acts as the Proton acceptor in catalysis.

This sequence belongs to the enolase family. Component of the RNA degradosome, a multiprotein complex involved in RNA processing and mRNA degradation. The cofactor is Mg(2+).

It localises to the cytoplasm. Its subcellular location is the secreted. The protein resides in the cell surface. It catalyses the reaction (2R)-2-phosphoglycerate = phosphoenolpyruvate + H2O. Its pathway is carbohydrate degradation; glycolysis; pyruvate from D-glyceraldehyde 3-phosphate: step 4/5. Its function is as follows. Catalyzes the reversible conversion of 2-phosphoglycerate (2-PG) into phosphoenolpyruvate (PEP). It is essential for the degradation of carbohydrates via glycolysis. This chain is Enolase, found in Yersinia pestis bv. Antiqua (strain Antiqua).